A 144-amino-acid polypeptide reads, in one-letter code: MKLNTLSPAAGAKHAAKRVGRGIGSGLGKTAGRGHKGQKSRSGGSIRPGFEGGQMPLKQRLPKFGFTSRKSLVSGEVRLNEIAKVDGDVVTIETLKQAGLLVNTVKFAKVVLSGEISRSVTVQGLRVTKGARAAIEAAGGKIEE.

The disordered stretch occupies residues 1–58; the sequence is MKLNTLSPAAGAKHAAKRVGRGIGSGLGKTAGRGHKGQKSRSGGSIRPGFEGGQMPLK. Positions 21–31 are enriched in gly residues; that stretch reads RGIGSGLGKTA.

This sequence belongs to the universal ribosomal protein uL15 family. As to quaternary structure, part of the 50S ribosomal subunit.

Binds to the 23S rRNA. In Psychromonas ingrahamii (strain DSM 17664 / CCUG 51855 / 37), this protein is Large ribosomal subunit protein uL15.